Reading from the N-terminus, the 350-residue chain is Small-conductance mechanosensitive channel MscMJ (350 aa).

A run of 5 helical transmembrane segments spans residues 10 to 30 (ISNI…GKIV), 59 to 79 (LPII…FLIL), 91 to 111 (VKVV…DGIF), 130 to 150 (IIKP…ILTA), and 154 to 174 (VGYD…ALAL).

The protein belongs to the MscS (TC 1.A.23) family.

It is found in the cell membrane. Functionally, small-conductance mechanosensitive channel that opens in response to stretch forces in the membrane lipid bilayer. Exhibits a sixfold preference for cations over anions. Non-rectifying. This is Small-conductance mechanosensitive channel MscMJ from Methanocaldococcus jannaschii (strain ATCC 43067 / DSM 2661 / JAL-1 / JCM 10045 / NBRC 100440) (Methanococcus jannaschii).